A 751-amino-acid chain; its full sequence is Photosystem I P700 chlorophyll a apoprotein A1 (751 aa).

8 helical membrane-spanning segments follow: residues 73–96, 159–182, 198–222, 294–312, 349–372, 388–414, 436–458, and 533–551; these read VFSA…FHGA, LYTT…FHYH, LNHH…HVSL, TAHH…GHMY, WHAQ…HHMY, LSLF…IFMV, AIIS…LYIH, and FLVH…LILL. 2 residues coordinate [4Fe-4S] cluster: cysteine 575 and cysteine 584. The next 2 membrane-spanning stretches (helical) occupy residues 591–612 and 665–687; these read HVFL…HFSW and LSAY…MFLF. Histidine 676 contributes to the chlorophyll a' binding site. Chlorophyll a-binding residues include methionine 684 and tyrosine 692. Tryptophan 693 contacts phylloquinone. Residues 725–745 traverse the membrane as a helical segment; the sequence is AVGVAHYLLGGIATTWSFFLA.

It belongs to the PsaA/PsaB family. The PsaA/B heterodimer binds the P700 chlorophyll special pair and subsequent electron acceptors. PSI consists of a core antenna complex that captures photons, and an electron transfer chain that converts photonic excitation into a charge separation. The eukaryotic PSI reaction center is composed of at least 11 subunits. P700 is a chlorophyll a/chlorophyll a' dimer, A0 is one or more chlorophyll a, A1 is one or both phylloquinones and FX is a shared 4Fe-4S iron-sulfur center. is required as a cofactor.

It localises to the plastid. The protein resides in the chloroplast thylakoid membrane. It carries out the reaction reduced [plastocyanin] + hnu + oxidized [2Fe-2S]-[ferredoxin] = oxidized [plastocyanin] + reduced [2Fe-2S]-[ferredoxin]. PsaA and PsaB bind P700, the primary electron donor of photosystem I (PSI), as well as the electron acceptors A0, A1 and FX. PSI is a plastocyanin/cytochrome c6-ferredoxin oxidoreductase, converting photonic excitation into a charge separation, which transfers an electron from the donor P700 chlorophyll pair to the spectroscopically characterized acceptors A0, A1, FX, FA and FB in turn. Oxidized P700 is reduced on the lumenal side of the thylakoid membrane by plastocyanin or cytochrome c6. The polypeptide is Photosystem I P700 chlorophyll a apoprotein A1 (Tetradesmus obliquus (Green alga)).